We begin with the raw amino-acid sequence, 853 residues long: MRARGIERNCQNWWKWGIMLLGILMTCSAADNLWVTVYYGVPVWKEATTTLFCASDAKSYETEAHNIWATHACVPTDPNPQEIALENVTENFNMWKNNMVEQMHEDIISLWDQSLKPCVKLTPLCVTLNCSDELRNNGTMGNNVTTEEKGMKNCSFNVTTVLKDKKQQVYALFYRLDIVPIDNDSSTNSTNYRLINCNTSAITQACPKVSFEPIPIHYCAPAGFAILKCRDKKFNGTGPCTNVSTVQCTHGIRPVVSTQLLLNGSLAEEEVIIRSENLTNNAKNIIAHLNESVKITCARPYQNTRQRTPIGLGQSLYTTRSRSIIGQAHCNISRAQWSKTLQQVARKLGTLLNKTIIKFKPSSGGDPEITTHSFNCGGEFFYCNTSGLFNSTWNISAWNNITESNNSTNTNITLQCRIKQIIKMVAGRKAIYAPPIERNILCSSNITGLLLTRDGGINNSTNETFRPGGGDMRDNWRSELYKYKVVQIEPLGVAPTRAKRRVVEREKRAIGLGAMFLGFLGAAGSTMGARSVTLTVQARQLMSGIVQQQNNLLRAIEAQQHLLQLTVWGIKQLQARILAVERYLKDQQLLGIWGCSGKHICTTNVPWNSSWSNRSLNEIWQNMTWMEWEREIDNYTGLIYSLIEESQTQQEKNEKELLELDKWASLWNWFSITQWLWYIKIFIMIIGGLIGLRIVFAVLSLVNRVRQGYSPLSFQTLLPAPRGPDRPEGTEEEGGERGRDRSVRLLNGFSALIWDDLRSLCLFSYHRLRDLILIAVRIVELLGRRGWDILKYLWNLLQYWSQELRNSASSLFDAIAIAVAEGTDRVIEIIQRACRAVLNIPRRIRQGLERSLL.

The N-terminal stretch at 1-31 (MRARGIERNCQNWWKWGIMLLGILMTCSAAD) is a signal peptide. The Extracellular segment spans residues 32–681 (NLWVTVYYGV…ITQWLWYIKI (650 aa)). Cys-53 and Cys-73 are disulfide-bonded. N-linked (GlcNAc...) asparagine; by host glycosylation is found at Asn-87, Asn-129, Asn-137, Asn-143, Asn-153, Asn-157, Asn-183, Asn-188, Asn-198, Asn-235, Asn-242, Asn-263, Asn-277, and Asn-290. 5 disulfide bridges follow: Cys-118–Cys-206, Cys-125–Cys-197, Cys-130–Cys-154, Cys-219–Cys-248, and Cys-229–Cys-240. The segment at 130–153 (CSDELRNNGTMGNNVTTEEKGMKN) is V1. The interval 154–197 (CSFNVTTVLKDKKQQVYALFYRLDIVPIDNDSSTNSTNYRLINC) is V2. Positions 297 to 329 (CARPYQNTRQRTPIGLGQSLYTTRSRSIIGQAH) are V3. An intrachain disulfide couples Cys-297 to Cys-330. N-linked (GlcNAc...) asparagine; by host glycosylation is found at Asn-331 and Asn-353. Residues 362–372 (SSGGDPEITTH) are CD4-binding loop. 2 disulfides stabilise this stretch: Cys-376–Cys-442 and Cys-383–Cys-416. The interval 383-416 (CNTSGLFNSTWNISAWNNITESNNSTNTNITLQC) is V4. Asn-384, Asn-390, Asn-394, Asn-400, Asn-405, Asn-406, Asn-411, Asn-445, Asn-458, Asn-459, and Asn-462 each carry an N-linked (GlcNAc...) asparagine; by host glycan. V5 regions lie at residues 457–468 (INNSTNETFRPG) and 460–468 (STNETFRPG). The interval 509 to 529 (AIGLGAMFLGFLGAAGSTMGA) is fusion peptide. The immunosuppression stretch occupies residues 571 to 589 (KQLQARILAVERYLKDQQL). Cys-595 and Cys-601 are disulfide-bonded. N-linked (GlcNAc...) asparagine; by host glycosylation is found at Asn-608, Asn-613, Asn-622, and Asn-634. Positions 630-664 (REIDNYTGLIYSLIEESQTQQEKNEKELLELDKWA) form a coiled coil. An MPER; binding to GalCer region spans residues 659 to 680 (ELDKWASLWNWFSITQWLWYIK). Residues 682 to 702 (FIMIIGGLIGLRIVFAVLSLV) traverse the membrane as a helical segment. Residues 703 to 853 (NRVRQGYSPL…IRQGLERSLL (151 aa)) are Cytoplasmic-facing. Positions 709 to 712 (YSPL) match the YXXL motif; contains endocytosis signal motif. The interval 716–738 (TLLPAPRGPDRPEGTEEEGGERG) is disordered. Over residues 723–738 (GPDRPEGTEEEGGERG) the composition is skewed to basic and acidic residues. Residues Cys-761 and Cys-834 are each lipidated (S-palmitoyl cysteine; by host). The short motif at 852–853 (LL) is the Di-leucine internalization motif element.

It belongs to the HIV-1 env protein family. The mature envelope protein (Env) consists of a homotrimer of non-covalently associated gp120-gp41 heterodimers. The resulting complex protrudes from the virus surface as a spike. There seems to be as few as 10 spikes on the average virion. Interacts with host CD4, CCR5 and CXCR4. Gp120 also interacts with the C-type lectins CD209/DC-SIGN and CLEC4M/DC-SIGNR (collectively referred to as DC-SIGN(R)). Gp120 and gp41 interact with GalCer. Gp120 interacts with host ITGA4/ITGB7 complex; on CD4+ T-cells, this interaction results in rapid activation of integrin ITGAL/LFA-1, which facilitates efficient cell-to-cell spreading of HIV-1. Gp120 interacts with cell-associated heparan sulfate; this interaction increases virus infectivity on permissive cells and may be involved in infection of CD4- cells. As to quaternary structure, the mature envelope protein (Env) consists of a homotrimer of non-covalently associated gp120-gp41 heterodimers. The resulting complex protrudes from the virus surface as a spike. There seems to be as few as 10 spikes on the average virion. Post-translationally, highly glycosylated by host. The high number of glycan on the protein is reffered to as 'glycan shield' because it contributes to hide protein sequence from adaptive immune system. In terms of processing, palmitoylation of the transmembrane protein and of Env polyprotein (prior to its proteolytic cleavage) is essential for their association with host cell membrane lipid rafts. Palmitoylation is therefore required for envelope trafficking to classical lipid rafts, but not for viral replication. Specific enzymatic cleavages in vivo yield mature proteins. Envelope glycoproteins are synthesized as an inactive precursor that is heavily N-glycosylated and processed likely by host cell furin in the Golgi to yield the mature SU and TM proteins. The cleavage site between SU and TM requires the minimal sequence [KR]-X-[KR]-R. About 2 of the 9 disulfide bonds of gp41 are reduced by P4HB/PDI, following binding to CD4 receptor.

The protein localises to the virion membrane. It localises to the host cell membrane. Its subcellular location is the host endosome membrane. Functionally, oligomerizes in the host endoplasmic reticulum into predominantly trimers. In a second time, gp160 transits in the host Golgi, where glycosylation is completed. The precursor is then proteolytically cleaved in the trans-Golgi and thereby activated by cellular furin or furin-like proteases to produce gp120 and gp41. In terms of biological role, attaches the virus to the host lymphoid cell by binding to the primary receptor CD4. This interaction induces a structural rearrangement creating a high affinity binding site for a chemokine coreceptor like CXCR4 and/or CCR5. Acts as a ligand for CD209/DC-SIGN and CLEC4M/DC-SIGNR, which are respectively found on dendritic cells (DCs), and on endothelial cells of liver sinusoids and lymph node sinuses. These interactions allow capture of viral particles at mucosal surfaces by these cells and subsequent transmission to permissive cells. HIV subverts the migration properties of dendritic cells to gain access to CD4+ T-cells in lymph nodes. Virus transmission to permissive T-cells occurs either in trans (without DCs infection, through viral capture and transmission), or in cis (following DCs productive infection, through the usual CD4-gp120 interaction), thereby inducing a robust infection. In trans infection, bound virions remain infectious over days and it is proposed that they are not degraded, but protected in non-lysosomal acidic organelles within the DCs close to the cell membrane thus contributing to the viral infectious potential during DCs' migration from the periphery to the lymphoid tissues. On arrival at lymphoid tissues, intact virions recycle back to DCs' cell surface allowing virus transmission to CD4+ T-cells. Acts as a class I viral fusion protein. Under the current model, the protein has at least 3 conformational states: pre-fusion native state, pre-hairpin intermediate state, and post-fusion hairpin state. During fusion of viral and target intracellular membranes, the coiled coil regions (heptad repeats) assume a trimer-of-hairpins structure, positioning the fusion peptide in close proximity to the C-terminal region of the ectodomain. The formation of this structure appears to drive apposition and subsequent fusion of viral and target cell membranes. Complete fusion occurs in host cell endosomes and is dynamin-dependent, however some lipid transfer might occur at the plasma membrane. The virus undergoes clathrin-dependent internalization long before endosomal fusion, thus minimizing the surface exposure of conserved viral epitopes during fusion and reducing the efficacy of inhibitors targeting these epitopes. Membranes fusion leads to delivery of the nucleocapsid into the cytoplasm. This Human immunodeficiency virus type 1 group M subtype D (isolate ELI) (HIV-1) protein is Envelope glycoprotein gp160.